A 284-amino-acid polypeptide reads, in one-letter code: uncharacterized protein (284 aa).

A disordered region spans residues Ile-236–Asp-284. Basic and acidic residues-rich tracts occupy residues Pro-252–Ser-262 and Phe-269–Asp-284.

This is an uncharacterized protein from Bacillus subtilis (strain 168).